The sequence spans 507 residues: Cytochrome P450 7B1 (507 aa).

3 consecutive transmembrane segments (helical) span residues 14 to 34 (PLALLGLLFAATLLLSALFLL), 178 to 198 (IFAFCGSLVFEITFATLYGKI), and 287 to 307 (FLWASLANTIPAMFWAMYYIL). Cys-447 is a heme binding site.

Belongs to the cytochrome P450 family. It depends on heme as a cofactor. In terms of tissue distribution, highly expressed in brain structures including the corpus callosum, the anterior commissure and fornix. The hippocampal expression is particularly prominent in the dentate gyrus. Expressed in liver and kidney. The hepatic expression is sexually dimorphic, predominantly detected in male liver while barely detectable in females. Expressed in lymph nodes and spleens, in both lymphoid and stromal compartments. Higher expression is detected in fibroblastic reticular cells, a type of stromal cells in the lymph nodes. Also expressed at high levels in the outer follicle and at the B cell-T cell boundary of splenic germinal centers. Expressed in dendritic cells (DCs) subpopulations being most abundant in CD8-positive DCs.

It localises to the endoplasmic reticulum membrane. The protein localises to the microsome membrane. It catalyses the reaction 25-hydroxycholesterol + reduced [NADPH--hemoprotein reductase] + O2 = 7alpha,25-dihydroxycholesterol + oxidized [NADPH--hemoprotein reductase] + H2O + H(+). The catalysed reaction is (25R)-cholest-5-ene-3beta,26-diol + reduced [NADPH--hemoprotein reductase] + O2 = (25R)-cholest-5-en-3beta,7alpha,26-triol + oxidized [NADPH--hemoprotein reductase] + H2O + H(+). The enzyme catalyses (24S)-hydroxycholesterol + reduced [NADPH--hemoprotein reductase] + O2 = (24S)-7alpha-dihydroxycholesterol + oxidized [NADPH--hemoprotein reductase] + H2O + H(+). It carries out the reaction (24S)-25-epoxycholesterol + reduced [NADPH--hemoprotein reductase] + O2 = (24S,25)-epoxy-7alpha-hydroxycholesterol + oxidized [NADPH--hemoprotein reductase] + H2O + H(+). It catalyses the reaction (22R)-hydroxycholesterol + reduced [NADPH--hemoprotein reductase] + O2 = (22R,7alpha)-dihydroxycholesterol + oxidized [NADPH--hemoprotein reductase] + H2O + H(+). The catalysed reaction is androst-5-en-3beta,17beta-diol + reduced [NADPH--hemoprotein reductase] + O2 = androst-5-en-3beta,7alpha,17beta-triol + oxidized [NADPH--hemoprotein reductase] + H2O + H(+). The enzyme catalyses 5alpha-androstane-3beta,17beta-diol + reduced [NADPH--hemoprotein reductase] + O2 = 5alpha-androstane-3beta,6alpha,17beta-triol + oxidized [NADPH--hemoprotein reductase] + H2O + H(+). It carries out the reaction 3beta-hydroxyandrost-5-en-17-one + reduced [NADPH--hemoprotein reductase] + O2 = 3beta,7alpha-dihydroxyandrost-5-en-17-one + oxidized [NADPH--hemoprotein reductase] + H2O + H(+). It catalyses the reaction 3beta-hydroxy-5alpha-androstan-17-one + reduced [NADPH--hemoprotein reductase] + O2 = 3beta,7alpha-dihydroxy-5alpha-androstan-17-one + oxidized [NADPH--hemoprotein reductase] + H2O + H(+). The catalysed reaction is pregnenolone + reduced [NADPH--hemoprotein reductase] + O2 = 7alpha-hydroxypregnenolone + oxidized [NADPH--hemoprotein reductase] + H2O + H(+). Its pathway is lipid metabolism; bile acid biosynthesis. The protein operates within steroid hormone biosynthesis. With respect to regulation, inhibited by drugs voriconazole and metyrapone. In terms of biological role, a cytochrome P450 monooxygenase involved in the metabolism of endogenous oxysterols and steroid hormones, including neurosteroids. Mechanistically, uses molecular oxygen inserting one oxygen atom into a substrate, and reducing the second into a water molecule, with two electrons provided by NADPH via cytochrome P450 reductase (CPR; NADPH-ferrihemoprotein reductase). Catalyzes the hydroxylation of carbon hydrogen bonds of steroids with a preference for 7-alpha position. Usually metabolizes steroids carrying a hydroxy group at position 3, functioning as a 3-hydroxy steroid 7-alpha hydroxylase. Hydroxylates oxysterols, including 25-hydroxycholesterol and (25R)-cholest-5-ene-3beta,26-diol toward 7-alpha hydroxy derivatives, which may be transported to the liver and converted to bile acids. Via its product 7-alpha,25-dihydroxycholesterol, a ligand for the chemotactic G protein-coupled receptor GPR183/EBI2, regulates B cell migration in germinal centers of lymphoid organs, thus guiding efficient maturation of plasma B cells and overall antigen-specific humoral immune response. 7-alpha hydroxylates neurosteroids, including 3beta-hydroxyandrost-5-en-17-one (dehydroepiandrosterone) and pregnenolone, both involved in hippocampus-associated memory and learning. Metabolizes androstanoids toward 6- or 7-alpha hydroxy derivatives. In Mus musculus (Mouse), this protein is Cytochrome P450 7B1.